Reading from the N-terminus, the 222-residue chain is Probable transaldolase (222 aa).

Residue K91 is the Schiff-base intermediate with substrate of the active site.

It belongs to the transaldolase family. Type 3B subfamily.

Its subcellular location is the cytoplasm. The enzyme catalyses D-sedoheptulose 7-phosphate + D-glyceraldehyde 3-phosphate = D-erythrose 4-phosphate + beta-D-fructose 6-phosphate. Its pathway is carbohydrate degradation; pentose phosphate pathway; D-glyceraldehyde 3-phosphate and beta-D-fructose 6-phosphate from D-ribose 5-phosphate and D-xylulose 5-phosphate (non-oxidative stage): step 2/3. In terms of biological role, transaldolase is important for the balance of metabolites in the pentose-phosphate pathway. In Chlorobium chlorochromatii (strain CaD3), this protein is Probable transaldolase.